Here is a 330-residue protein sequence, read N- to C-terminus: Transcription factor TGA5 (330 aa).

A compositionally biased stretch (polar residues) spans 1–13 (MGDTSPRTSVSTD). The segment at 1–64 (MGDTSPRTSV…REAARKSRLR (64 aa)) is disordered. Over residues 35–47 (SSDRSKSKMDQKT) the composition is skewed to basic and acidic residues. The bZIP domain maps to 44-107 (DQKTLRRLAQ…SSGDQAHSTA (64 aa)). Coiled coils occupy residues 45–98 (QKTL…FISS) and 211–244 (EQQS…SLAD). The tract at residues 46 to 66 (KTLRRLAQNREAARKSRLRKK) is basic motif. A leucine-zipper region spans residues 72–86 (LENSRLKLTQLEQEL). A DOG1 domain is found at 111-327 (AMAFDVEYRR…RALSSLWLAR (217 aa)).

It belongs to the bZIP family. In terms of assembly, binds DNA as a dimer. Interaction with the Dof domain protein OBP1 enhances the binding to the ocs element. Interacts with NPR1, NPR3 and NPR4. In terms of tissue distribution, predominantly expressed in roots.

The protein resides in the nucleus. Functionally, transcriptional activator that binds specifically to the DNA sequence 5'-TGACG-3'. Recognizes ocs elements like the as-1 motif of the cauliflower mosaic virus 35S promoter. Binding to the as-1-like cis elements mediate auxin- and salicylic acid-inducible transcription. May be involved in the induction of the systemic acquired resistance (SAR) via its interaction with NPR1. Could also bind to the Hex-motif (5'-TGACGTGG-3') another cis-acting element found in plant histone promoters. The polypeptide is Transcription factor TGA5 (TGA5) (Arabidopsis thaliana (Mouse-ear cress)).